The primary structure comprises 102 residues: Secretoglobin family 1D member (102 aa).

An N-terminal signal peptide occupies residues M1–A21. N87 carries an N-linked (GlcNAc...) asparagine glycan.

It belongs to the secretoglobin family. Lipophilin subfamily.

The protein localises to the secreted. Its function is as follows. May bind androgens and other steroids. May be under transcriptional regulation of steroid hormones. The sequence is that of Secretoglobin family 1D member (SCGB1D) from Bos taurus (Bovine).